Reading from the N-terminus, the 278-residue chain is Large ribosomal subunit protein uL2 (278 aa).

2 disordered regions span residues 27–57 and 224–278; these read STPEKSLVRPLHSKGGRNNAGRVTVRHQGGG and VAMN…NKKR. A compositionally biased stretch (basic residues) spans 258–278; the sequence is RSPKKASSKYIVRRRKTNKKR.

Belongs to the universal ribosomal protein uL2 family. Part of the 50S ribosomal subunit. Forms a bridge to the 30S subunit in the 70S ribosome.

In terms of biological role, one of the primary rRNA binding proteins. Required for association of the 30S and 50S subunits to form the 70S ribosome, for tRNA binding and peptide bond formation. It has been suggested to have peptidyltransferase activity; this is somewhat controversial. Makes several contacts with the 16S rRNA in the 70S ribosome. The protein is Large ribosomal subunit protein uL2 of Streptomyces avermitilis (strain ATCC 31267 / DSM 46492 / JCM 5070 / NBRC 14893 / NCIMB 12804 / NRRL 8165 / MA-4680).